Consider the following 149-residue polypeptide: Glutamate mutase sigma subunit (149 aa).

One can recognise a B12-binding domain in the interval 5–138; the sequence is DPTVVLGTIG…DAVKTELDVD (134 aa). Residues 15 to 19, His18, 63 to 65, and 94 to 98 each bind adenosylcob(III)alamin; these read SDAHA, SSL, and NLAVG.

This sequence belongs to the methylaspartate mutase GlmS subunit family. As to quaternary structure, heterotetramer composed of 2 epsilon subunits (GlmE) and 2 sigma subunits (GlmS). GlmE exists as a homodimer and GlmS as a monomer. Adenosylcob(III)alamin is required as a cofactor.

It carries out the reaction (2S,3S)-3-methyl-L-aspartate = L-glutamate. It participates in amino-acid degradation; L-glutamate degradation via mesaconate pathway; acetate and pyruvate from L-glutamate: step 1/4. Catalyzes the carbon skeleton rearrangement of L-glutamate to L-threo-3-methylaspartate ((2S,3S)-3-methylaspartate). The polypeptide is Glutamate mutase sigma subunit (Halobacterium salinarum (strain ATCC 700922 / JCM 11081 / NRC-1) (Halobacterium halobium)).